Here is a 553-residue protein sequence, read N- to C-terminus: Serine protease 53 (553 aa).

The N-terminal stretch at 1 to 23 (MKWCWGPVLLIAGATVLMEGLQA) is a signal peptide. Peptidase S1 domains are found at residues 24–273 (AQRA…ARVQ) and 294–526 (VACG…SLDW). The segment at 27-46 (ACGQRGPGPPKPQEGNTVPG) is disordered. A disulfide bond links Cys62 and Cys78. Residues His77 and Asp128 each act as charge relay system in the active site. Disulfide bonds link Cys158-Cys230, Cys187-Cys209, Cys220-Cys249, and Cys326-Cys342. Catalysis depends on charge relay system residues Ser224, His341, and Asp382. Cystine bridges form between Cys444-Cys464 and Cys474-Cys502. Catalysis depends on Ser478, which acts as the Charge relay system.

The protein belongs to the peptidase S1 family. Predominantly detected in testis, liver, heart and ovary, as well as in several tumor cell lines.

It localises to the secreted. Functionally, in vitro can degrade the fibrinogen alpha chain of as well as pro-urokinase-type plasminogen activator. This chain is Serine protease 53 (PRSS53), found in Homo sapiens (Human).